Reading from the N-terminus, the 264-residue chain is Endoglucanase S (264 aa).

Positions 1–32 (MQTVNTQPHRIFRVLLPAVFSSLLLSSLTVSA) are cleaved as a signal peptide.

Belongs to the glycosyl hydrolase 12 (cellulase H) family.

The enzyme catalyses Endohydrolysis of (1-&gt;4)-beta-D-glucosidic linkages in cellulose, lichenin and cereal beta-D-glucans.. This Pectobacterium parmentieri protein is Endoglucanase S (celS).